Consider the following 299-residue polypeptide: Protein U23 (299 aa).

An N-terminal signal peptide occupies residues 1-27 (MRKSEFNAKSCFLMIGICVFNLNSSSC). A helical membrane pass occupies residues 247-267 (LVIWICGISFVGAFIIVIVIL).

The protein resides in the host membrane. The protein is Protein U23 (U23) of Human herpesvirus 6B (strain Z29) (HHV-6 variant B).